The primary structure comprises 212 residues: 7-carboxy-7-deazaguanine synthase (212 aa).

Substrate is bound by residues 22 to 24 (LQG) and Arg-37. A Radical SAM core domain is found at 28–212 (NTGMPAVFVR…VQTHKWAGIE (185 aa)). Cys-41, Cys-45, and Cys-48 together coordinate [4Fe-4S] cluster. A Mg(2+)-binding site is contributed by Thr-50. Residue Thr-78 coordinates substrate. Residues Gly-80 and 122-124 (SPK) each bind S-adenosyl-L-methionine.

Belongs to the radical SAM superfamily. 7-carboxy-7-deazaguanine synthase family. In terms of assembly, homodimer. [4Fe-4S] cluster serves as cofactor. S-adenosyl-L-methionine is required as a cofactor. It depends on Mg(2+) as a cofactor.

The catalysed reaction is 6-carboxy-5,6,7,8-tetrahydropterin + H(+) = 7-carboxy-7-deazaguanine + NH4(+). It functions in the pathway purine metabolism; 7-cyano-7-deazaguanine biosynthesis. Its function is as follows. Catalyzes the complex heterocyclic radical-mediated conversion of 6-carboxy-5,6,7,8-tetrahydropterin (CPH4) to 7-carboxy-7-deazaguanine (CDG), a step common to the biosynthetic pathways of all 7-deazapurine-containing compounds. In Neisseria meningitidis serogroup B (strain ATCC BAA-335 / MC58), this protein is 7-carboxy-7-deazaguanine synthase.